Reading from the N-terminus, the 177-residue chain is Crossover junction endodeoxyribonuclease RuvC (177 aa).

Catalysis depends on residues aspartate 8, glutamate 72, and aspartate 144. Mg(2+) contacts are provided by aspartate 8, glutamate 72, and aspartate 144.

This sequence belongs to the RuvC family. Homodimer which binds Holliday junction (HJ) DNA. The HJ becomes 2-fold symmetrical on binding to RuvC with unstacked arms; it has a different conformation from HJ DNA in complex with RuvA. In the full resolvosome a probable DNA-RuvA(4)-RuvB(12)-RuvC(2) complex forms which resolves the HJ. Requires Mg(2+) as cofactor.

Its subcellular location is the cytoplasm. The enzyme catalyses Endonucleolytic cleavage at a junction such as a reciprocal single-stranded crossover between two homologous DNA duplexes (Holliday junction).. Functionally, the RuvA-RuvB-RuvC complex processes Holliday junction (HJ) DNA during genetic recombination and DNA repair. Endonuclease that resolves HJ intermediates. Cleaves cruciform DNA by making single-stranded nicks across the HJ at symmetrical positions within the homologous arms, yielding a 5'-phosphate and a 3'-hydroxyl group; requires a central core of homology in the junction. The consensus cleavage sequence is 5'-(A/T)TT(C/G)-3'. Cleavage occurs on the 3'-side of the TT dinucleotide at the point of strand exchange. HJ branch migration catalyzed by RuvA-RuvB allows RuvC to scan DNA until it finds its consensus sequence, where it cleaves and resolves the cruciform DNA. The sequence is that of Crossover junction endodeoxyribonuclease RuvC from Teredinibacter turnerae (strain ATCC 39867 / T7901).